Reading from the N-terminus, the 436-residue chain is Septin-7 (436 aa).

Residue serine 2 is modified to N-acetylserine. Phosphotyrosine is present on tyrosine 29. The Septin-type G domain maps to 46–315 (RGFEFTLMVV…ENYRSRKLAA (270 aa)). Residues 46–316 (RGFEFTLMVV…NYRSRKLAAV (271 aa)) are interaction with SEPTIN12. The segment at 56–63 (GESGLGKS) is G1 motif. A GTP-binding site is contributed by 56 to 63 (GESGLGKS). Serine 76 is modified (phosphoserine). Residues threonine 89, glycine 115, and 194–202 (KADTLTPEE) each bind GTP. The G3 motif stretch occupies residues 112-115 (DTPG). Residues 193-196 (AKAD) form a G4 motif region. The residue at position 227 (threonine 227) is a Phosphothreonine. Residues glycine 249 and arginine 264 each contribute to the GTP site. Residues 331 to 436 (TKSPLAQMEE…EKNKKKGKIF (106 aa)) adopt a coiled-coil conformation. Serine 333 bears the Phosphoserine mark. The residue at position 372 (lysine 372) is an N6-acetyllysine. Over residues 377–409 (ELQRRHEQMKKNLEAQHKELEEKRRQFEEEKAN) the composition is skewed to basic and acidic residues. The segment at 377-436 (ELQRRHEQMKKNLEAQHKELEEKRRQFEEEKANWEAQQRILEQQNSSRTLEKNKKKGKIF) is disordered. At serine 423 the chain carries Phosphoserine. Threonine 425 carries the phosphothreonine modification.

This sequence belongs to the TRAFAC class TrmE-Era-EngA-EngB-Septin-like GTPase superfamily. Septin GTPase family. As to quaternary structure, septins polymerize into heterooligomeric protein complexes that form filaments, and associate with cellular membranes, actin filaments and microtubules. GTPase activity is required for filament formation. Filaments are assembled from asymmetrical heterotrimers, composed of SEPTIN2, SEPTIN6 and SEPTIN7 that associate head-to-head to form a hexameric unit. Within the trimer, directly interacts with SEPTIN6, while interaction with SEPTIN2 seems indirect. In the absence of SEPTIN6, forms homodimers. Interacts directly with CENPE and links CENPE to septin filaments composed of SEPTIN2, SEPTIN6 and SEPTIN7. Interacts with SEPTIN8, SEPTIN9 and SEPTIN11. Component of a septin core octameric complex consisting of SEPTIN12, SEPTIN7, SEPTIN6 and SEPTIN2 or SEPTIN4 in the order 12-7-6-2-2-6-7-12 or 12-7-6-4-4-6-7-12 and located in the sperm annulus; the SEPTIN12:SEPTIN7 association is mediated by the respective GTP-binding domains. Interacts with SEPTIN2 and SEPTIN5. As to expression, expressed in the cerebral cortex (at protein level).

Its subcellular location is the cytoplasm. It localises to the chromosome. The protein resides in the centromere. It is found in the kinetochore. The protein localises to the cytoskeleton. Its subcellular location is the spindle. It localises to the cleavage furrow. The protein resides in the midbody. It is found in the cilium axoneme. The protein localises to the cell projection. Its subcellular location is the cilium. It localises to the flagellum. Filament-forming cytoskeletal GTPase. Required for normal organization of the actin cytoskeleton. Required for normal progress through mitosis. Involved in cytokinesis. Required for normal association of CENPE with the kinetochore. Plays a role in ciliogenesis and collective cell movements. Forms a filamentous structure with SEPTIN12, SEPTIN6, SEPTIN2 and probably SEPTIN4 at the sperm annulus which is required for the structural integrity and motility of the sperm tail during postmeiotic differentiation. This chain is Septin-7, found in Mus musculus (Mouse).